A 643-amino-acid polypeptide reads, in one-letter code: Thread biopolymer filament subunit alpha (643 aa).

Residues 1–13 (MSISQTVSKSYTK) are compositionally biased toward polar residues. Residues 1–34 (MSISQTVSKSYTKSVSRGGQGVSYSQSSSHKVGG) are disordered. Residues 1-191 (MSISQTVSKS…PDTVQHTRIR (191 aa)) are head. Low complexity predominate over residues 14-31 (SVSRGGQGVSYSQSSSHK). The IF rod domain maps to 192–510 (EKQDLQTLNT…KLLDSEETRI (319 aa)). The segment at 193 to 227 (KQDLQTLNTKFANLVDQVRTLEQHNAILKAQISMI) is coil 1A. Residues 228–240 (TSPSDTPEGPVNT) are linker 1. The segment at 241–341 (AVVASTVTAT…YNARVREVQA (101 aa)) is coil 1B. A linker 12 region spans residues 342–362 (AVTGGPTAAYSIRVDNTHQAI). The segment at 363–381 (DLTTSLQEMKTHYEVLATK) is coil 2A. The segment at 382–389 (SREEAFTQ) is linker 2. A coil 2B region spans residues 390 to 510 (VQPRIQEMAV…KLLDSEETRI (121 aa)). Positions 511-643 (SHGGGITITT…SSARSSSRIY (133 aa)) are tail. The segment at 622 to 643 (SRAGYSASRKSYSSARSSSRIY) is disordered.

This sequence belongs to the intermediate filament family. Coiled-coil heterodimer of an alpha and a gamma subunit. Assemble into 10 nm filaments. Forms a massive, conical, intermediate filament biopolymer of approximately 60 cm.

The protein localises to the secreted. Its subcellular location is the extracellular space. Its function is as follows. Released extracellularly into seawater and provides physical and biological defense against invasive organism by modulation of the viscoelastic properties of mucus. This chain is Thread biopolymer filament subunit alpha, found in Eptatretus stoutii (Pacific hagfish).